The following is a 142-amino-acid chain: Large ribosomal subunit protein uL13 (142 aa).

This sequence belongs to the universal ribosomal protein uL13 family. In terms of assembly, part of the 50S ribosomal subunit.

In terms of biological role, this protein is one of the early assembly proteins of the 50S ribosomal subunit, although it is not seen to bind rRNA by itself. It is important during the early stages of 50S assembly. The protein is Large ribosomal subunit protein uL13 of Pseudomonas putida (strain ATCC 700007 / DSM 6899 / JCM 31910 / BCRC 17059 / LMG 24140 / F1).